A 459-amino-acid chain; its full sequence is MAP kinase-interacting serine/threonine-protein kinase 2 (459 aa).

Positions 37 to 67 (DFSPQCEARPDMPSSQPIDIPDAKKRGRKKK) are disordered. Positions 60–66 (KKRGRKK) match the Nuclear localization signal motif. Position 74 is a phosphoserine (Ser74). Residues 84 to 368 (QLQEDVLGEG…AAQVLQHPWV (285 aa)) enclose the Protein kinase domain. ATP is bound by residues 90–98 (LGEGAHARV) and Lys113. Residue 160-162 (EKM) coordinates staurosporine. The active-site Proton acceptor is the Asp205. Residue Glu209 coordinates staurosporine. Residues Thr244 and Thr249 each carry the phosphothreonine modification. The Zn(2+) site is built by Cys299, Cys311, and Cys314. Position 379 is a phosphothreonine (Thr379). A phosphoserine mark is found at Ser431 and Ser434. The short motif at 438–442 (LAQRR) is the MAP kinase binding element. Position 446 is a phosphoserine (Ser446). The residue at position 450 (Thr450) is a Phosphothreonine.

It belongs to the protein kinase superfamily. CAMK Ser/Thr protein kinase family. Interacts with ESR2 and EIF4E in the nucleus. Monomer. Interacts with the C-terminal regions of EIF4G1 and EIF4G2; this interaction is promoted when MAPK pathways are repressed but repressed upon ERK proteins activation. Also binds to dephosphorylated MAPK3/ERK1 and MAPK1/ERK2. Interaction with phosphorylated MAPK3/ERK1 and MAPK1/ERK2 protects it from dephosphorylation and inactivation. It depends on Mg(2+) as a cofactor. The cofactor is Zn(2+). Post-translationally, dual phosphorylation of Thr-244 and Thr-249 activates the kinase. Phosphorylation of Thr-379 activates the kinase. Phosphorylated upon arsenic trioxide As(2)O(3) treatment. Phosphorylated by MAPK1/ERK2, MAPK11 and MAPK14. Dephosphorylated by PP2A. In terms of tissue distribution, ubiquitously expressed in all tissues examined, with high levels in skeletal muscle and low levels in brain.

It localises to the cytoplasm. Its subcellular location is the nucleus. The protein resides in the PML body. It catalyses the reaction L-seryl-[protein] + ATP = O-phospho-L-seryl-[protein] + ADP + H(+). The enzyme catalyses L-threonyl-[protein] + ATP = O-phospho-L-threonyl-[protein] + ADP + H(+). Its activity is regulated as follows. Inhibited by CGP57380 and staurosporine. Serine/threonine-protein kinase that phosphorylates SFPQ/PSF, HNRNPA1 and EIF4E. May play a role in the response to environmental stress and cytokines. Appears to regulate translation by phosphorylating EIF4E, thus increasing the affinity of this protein for the 7-methylguanosine-containing mRNA cap. Required for mediating PP2A-inhibition-induced EIF4E phosphorylation. Triggers EIF4E shuttling from cytoplasm to nucleus. Enhances the formation of EIF4F complex in pachytene spermatocytes, thus promoting mRNA translation during spermatogenesis. Displays a high basal kinase activity. Acts as a mediator of the suppressive effects of IFNgamma on hematopoiesis. Negative regulator for signals that control generation of arsenic trioxide As(2)O(3)-dependent apoptosis and anti-leukemic responses. Involved in anti-apoptotic signaling in response to serum withdrawal. The chain is MAP kinase-interacting serine/threonine-protein kinase 2 (Mknk2) from Mus musculus (Mouse).